The chain runs to 308 residues: tRNA pseudouridine synthase B (308 aa).

The active-site Nucleophile is the aspartate 44.

It belongs to the pseudouridine synthase TruB family. Type 1 subfamily.

The catalysed reaction is uridine(55) in tRNA = pseudouridine(55) in tRNA. Responsible for synthesis of pseudouridine from uracil-55 in the psi GC loop of transfer RNAs. The chain is tRNA pseudouridine synthase B from Nitratidesulfovibrio vulgaris (strain DSM 19637 / Miyazaki F) (Desulfovibrio vulgaris).